The primary structure comprises 86 residues: Small ribosomal subunit protein uS15 (86 aa).

This sequence belongs to the universal ribosomal protein uS15 family. Part of the 30S ribosomal subunit. Forms a bridge to the 50S subunit in the 70S ribosome, contacting the 23S rRNA.

One of the primary rRNA binding proteins, it binds directly to 16S rRNA where it helps nucleate assembly of the platform of the 30S subunit by binding and bridging several RNA helices of the 16S rRNA. Its function is as follows. Forms an intersubunit bridge (bridge B4) with the 23S rRNA of the 50S subunit in the ribosome. The polypeptide is Small ribosomal subunit protein uS15 (Ruthia magnifica subsp. Calyptogena magnifica).